The primary structure comprises 196 residues: Shikimate kinase (196 aa).

21–26 (GTGKSR) serves as a coordination point for ATP. Position 25 (S25) interacts with Mg(2+). Substrate contacts are provided by D43, R67, and G89. R126 is an ATP binding site. R145 contacts substrate. R161 is an ATP binding site.

Belongs to the shikimate kinase family. In terms of assembly, monomer. Requires Mg(2+) as cofactor.

Its subcellular location is the cytoplasm. The catalysed reaction is shikimate + ATP = 3-phosphoshikimate + ADP + H(+). It participates in metabolic intermediate biosynthesis; chorismate biosynthesis; chorismate from D-erythrose 4-phosphate and phosphoenolpyruvate: step 5/7. Catalyzes the specific phosphorylation of the 3-hydroxyl group of shikimic acid using ATP as a cosubstrate. The protein is Shikimate kinase of Deinococcus radiodurans (strain ATCC 13939 / DSM 20539 / JCM 16871 / CCUG 27074 / LMG 4051 / NBRC 15346 / NCIMB 9279 / VKM B-1422 / R1).